A 313-amino-acid polypeptide reads, in one-letter code: tRNA dimethylallyltransferase (313 aa).

ATP is bound at residue 17 to 24; sequence GPTASGKT. Substrate is bound at residue 19 to 24; sequence TASGKT. 3 interaction with substrate tRNA regions span residues 42–45, 166–170, and 247–252; these read DSAL, QRLSR, and RCVGYR.

Belongs to the IPP transferase family. As to quaternary structure, monomer. The cofactor is Mg(2+).

The catalysed reaction is adenosine(37) in tRNA + dimethylallyl diphosphate = N(6)-dimethylallyladenosine(37) in tRNA + diphosphate. Functionally, catalyzes the transfer of a dimethylallyl group onto the adenine at position 37 in tRNAs that read codons beginning with uridine, leading to the formation of N6-(dimethylallyl)adenosine (i(6)A). This chain is tRNA dimethylallyltransferase, found in Yersinia pseudotuberculosis serotype O:1b (strain IP 31758).